The following is a 236-amino-acid chain: Calcium-binding lectin RapA2 (236 aa).

Its subcellular location is the secreted. Its function is as follows. Interacts specifically in a calcium-dependent manner with the acidic exopolysaccharide (EPS) and capsular polysaccharide produced by R.leguminosarum. Could be involved in the development of the biofilm matrix made of EPS. This chain is Calcium-binding lectin RapA2, found in Rhizobium johnstonii (strain DSM 114642 / LMG 32736 / 3841) (Rhizobium leguminosarum bv. viciae).